Reading from the N-terminus, the 539-residue chain is Sorting nexin-27 (539 aa).

A disordered region spans residues 1 to 40 (MADEDGEGIHPSTPHRNGGGGGGSGLHCAGNGGGGGGGPR). Residues 17-39 (NGGGGGGSGLHCAGNGGGGGGGP) show a composition bias toward gly residues. Positions 41–134 (VVRIVKSESG…ELILTVLSVP (94 aa)) constitute a PDZ domain. A phosphoserine mark is found at serine 49 and serine 60. Residues 159–267 (QAVPISVPTY…EFLSESDENY (109 aa)) enclose the PX domain. A Ras-associating domain is found at 271-360 (SDVELRVALP…TCLTIRKWLF (90 aa)). The FERM-like region F1 stretch occupies residues 271–360 (SDVELRVALP…TCLTIRKWLF (90 aa)). The interval 371–419 (NDLAVTYFFHQAVDDVKKGYIKAEEKSYQLQKLYEQRKMVMYLNMLRTC) is FERM-like region F2. The interval 423–523 (NEIIFPHCAC…RVFCELKWRK (101 aa)) is FERM-like region F3.

As to quaternary structure, core component of the SNX27-retromer, a multiprotein complex composed of SNX27, the WASH complex and the retromer complex. Interacts (via PDZ domain) with a number of target transmembrane proteins (via PDZ-binding motif): ABCC4, ADRB2, ARHGEF7, GRIA1, GRIA2, GRIN1, GRIN2A GRIN2C, KCNJ6, KCNJ9 and SLC2A1/GLUT1. Interacts (via the FERM-like regions) with the WASH complex. Interacts with SNX1. Interacts with CYTIP. Interacts with DGKZ. Interacts with MCC. Interacts (via PDZ domains) with SLC9A3; directs SLC9A3 membrane insertion from early endosomes to the plasma membrane. In terms of tissue distribution, isoform 1 is predominantly expressed in the testis, whereas isoform 2 is predominant in various brain regions, including, neocortex, paleocortex, striatum, hippocampus, cerebellum and brain stem. Expressed in cells of hematopoietic origin.

The protein localises to the early endosome membrane. The protein resides in the cytoplasm. Its subcellular location is the cytosol. Its function is as follows. Involved in the retrograde transport from endosome to plasma membrane, a trafficking pathway that promotes the recycling of internalized transmembrane proteins. Following internalization, endocytosed transmembrane proteins are delivered to early endosomes and recycled to the plasma membrane instead of being degraded in lysosomes. SNX27 specifically binds and directs sorting of a subset of transmembrane proteins containing a PDZ-binding motif at the C-terminus: following interaction with target transmembrane proteins, associates with the retromer complex, preventing entry into the lysosomal pathway, and promotes retromer-tubule based plasma membrane recycling. SNX27 also binds with the WASH complex. Interacts with membranes containing phosphatidylinositol-3-phosphate (PtdIns(3P)). May participate in establishment of natural killer cell polarity. Recruits CYTIP to early endosomes. The sequence is that of Sorting nexin-27 (Snx27) from Rattus norvegicus (Rat).